A 460-amino-acid chain; its full sequence is Dihydroorotate dehydrogenase (quinone), mitochondrial (460 aa).

Residues 1-32 constitute a mitochondrion transit peptide; sequence MAGRAATSSAKWAREFLFRRVSSNPLGATRNC. Residues 53–69 traverse the membrane as a helical segment; that stretch reads ILTGATIGLAIAGGAYV. FMN contacts are provided by residues 141 to 145 and Ser165; that span reads AGFDK. Lys145 is a substrate binding site. 190 to 194 is a binding site for substrate; sequence NRCGF. Residues 213–245 are disordered; it reads RMLAETSATSSSPSDDVKPGGKSGPGILGVNLG. The FMN site is built by Asn243 and Asn274. 274–279 lines the substrate pocket; it reads NVSSPN. Ser277 (nucleophile) is an active-site residue. Positions 319 and 347 each coordinate FMN. Substrate is bound at residue 348-349; sequence NT. FMN-binding positions include Gly371, Gly400, and 421–422; that span reads YT.

This sequence belongs to the dihydroorotate dehydrogenase family. Type 2 subfamily. FMN serves as cofactor.

Its subcellular location is the mitochondrion inner membrane. It carries out the reaction (S)-dihydroorotate + a quinone = orotate + a quinol. Its pathway is pyrimidine metabolism; UMP biosynthesis via de novo pathway; orotate from (S)-dihydroorotate (quinone route): step 1/1. Functionally, catalyzes the conversion of dihydroorotate to orotate with quinone as electron acceptor. In Arabidopsis thaliana (Mouse-ear cress), this protein is Dihydroorotate dehydrogenase (quinone), mitochondrial (PYRD).